The following is a 214-amino-acid chain: Phosphatidylserine decarboxylase proenzyme (214 aa).

Serine 183 functions as the Schiff-base intermediate with substrate; via pyruvic acid in the catalytic mechanism. Serine 183 bears the Pyruvic acid (Ser); by autocatalysis mark.

Belongs to the phosphatidylserine decarboxylase family. PSD-A subfamily. As to quaternary structure, heterodimer of a large membrane-associated beta subunit and a small pyruvoyl-containing alpha subunit. Pyruvate is required as a cofactor. Is synthesized initially as an inactive proenzyme. Formation of the active enzyme involves a self-maturation process in which the active site pyruvoyl group is generated from an internal serine residue via an autocatalytic post-translational modification. Two non-identical subunits are generated from the proenzyme in this reaction, and the pyruvate is formed at the N-terminus of the alpha chain, which is derived from the carboxyl end of the proenzyme. The post-translation cleavage follows an unusual pathway, termed non-hydrolytic serinolysis, in which the side chain hydroxyl group of the serine supplies its oxygen atom to form the C-terminus of the beta chain, while the remainder of the serine residue undergoes an oxidative deamination to produce ammonia and the pyruvoyl prosthetic group on the alpha chain.

It localises to the cell membrane. The enzyme catalyses a 1,2-diacyl-sn-glycero-3-phospho-L-serine + H(+) = a 1,2-diacyl-sn-glycero-3-phosphoethanolamine + CO2. It participates in phospholipid metabolism; phosphatidylethanolamine biosynthesis; phosphatidylethanolamine from CDP-diacylglycerol: step 2/2. Functionally, catalyzes the formation of phosphatidylethanolamine (PtdEtn) from phosphatidylserine (PtdSer). The chain is Phosphatidylserine decarboxylase proenzyme from Chlorobaculum parvum (strain DSM 263 / NCIMB 8327) (Chlorobium vibrioforme subsp. thiosulfatophilum).